Reading from the N-terminus, the 77-residue chain is U8-lycotoxin-Ls1n (77 aa).

The N-terminal stretch at 1 to 20 (MKLMIFTGLVLFAIVSLIEA) is a signal peptide. The propeptide occupies 21–26 (QAENEK).

This sequence belongs to the neurotoxin 19 (CSTX) family. 08 (U8-Lctx) subfamily. In terms of processing, contains 4 disulfide bonds. Expressed by the venom gland.

The protein localises to the secreted. The chain is U8-lycotoxin-Ls1n from Lycosa singoriensis (Wolf spider).